The following is a 276-amino-acid chain: Ubiquinone biosynthesis protein coq11, mitochondrial (276 aa).

The protein belongs to the NAD(P)-dependent epimerase/dehydratase family.

The protein localises to the mitochondrion. In terms of biological role, acts in the coenzyme Q biosynthetic pathway. The chain is Ubiquinone biosynthesis protein coq11, mitochondrial from Schizosaccharomyces pombe (strain 972 / ATCC 24843) (Fission yeast).